The sequence spans 236 residues: uncharacterized protein (236 aa).

It belongs to the HyuE racemase family.

Its subcellular location is the cytoplasm. This is an uncharacterized protein from Schizosaccharomyces pombe (strain 972 / ATCC 24843) (Fission yeast).